The primary structure comprises 752 residues: MGPLMVLFCLLFLYPGLADSAPSCPQNVNISGGTFTLSHGWAPGSLLTYSCPQGLYPSPASRLCKSSGQWQTPRATRSLSKAVCKPVRCPAPVSFENGIYTPRLGSYPVGGNVSFECEDGFILRGSPVRQCRPNGMWDGETAVCDNGAGHCPNPGISLGAVRTGFRFGHGDKVRYRCSSNLVLTGSSERECQGNGVWSGTEPICRQPYSYDFPEDVAPALGTSFSHMLGATNPTQKTKESLGRKIQIQRSGHLNLYLLLDCSQSVSENDFLIFKESASLMVDRIFSFEINVSVAIITFASEPKVLMSVLNDNSRDMTDVISSLENANYKDHENGTGTNTYAALNSVYLMMNNQMRLLGMETMAWQEIRHAIILLTDGKSNMGGSPKTAVDHIREILNINQKRNDYLDIYAIGVGKLDVDWRELNELGSKKDGERHAFILQDTKALHQVFEHMLDVSKLTDTICGVGNMSANASDQERTPWHVTIKPKSQETCRGALISDQWVLTAAHCFRDGNDHSLWRVNVGDPKSQWGKEFLIEKAVISPGFDVFAKKNQGILEFYGDDIALLKLAQKVKMSTHARPICLPCTMEANLALRRPQGSTCRDHENELLNKQSVPAHFVALNGSKLNINLKMGVEWTSCAEVVSQEKTMFPSLTDVREVVTDQFLCSGTQEDESPCKGESGGAVFLERRFRFFQVGLVSWGLYNPCLGSADKNSRKRAPRSKVPPPRDFHINLFRMQPWLRQHLGDVLNFLPL.

Residues 1 to 20 (MGPLMVLFCLLFLYPGLADS) form the signal peptide. 3 Sushi domains span residues 22 to 86 (PSCP…VCKP), 87 to 146 (VRCP…VCDN), and 149 to 206 (GHCP…ICRQ). 6 disulfide bridges follow: Cys-24–Cys-64, Cys-51–Cys-84, Cys-89–Cys-131, Cys-117–Cys-144, Cys-151–Cys-191, and Cys-177–Cys-204. The N-linked (GlcNAc...) asparagine glycan is linked to Asn-29. Asn-112 carries an N-linked (GlcNAc...) asparagine glycan. The VWFA domain occupies 254–452 (NLYLLLDCSQ…KALHQVFEHM (199 aa)). Residues 260–264 (DCSQS) carry the MIDAS-like motif motif. Mg(2+) is bound by residues Ser-262 and Ser-264. Residues Asn-290 and Asn-333 are each glycosylated (N-linked (GlcNAc...) asparagine). Thr-337 contributes to the Mg(2+) binding site. Cystine bridges form between Cys-463–Cys-581, Cys-492–Cys-508, and Cys-584–Cys-600. The Peptidase S1 domain maps to 464 to 744 (GVGNMSANAS…MQPWLRQHLG (281 aa)). 2 N-linked (GlcNAc...) asparagine glycosylation sites follow: Asn-467 and Asn-471. Active-site charge relay system residues include His-507 and Asp-561. The N-linked (GlcNAc...) asparagine glycan is linked to Asn-621. Cystine bridges form between Cys-638–Cys-665 and Cys-675–Cys-705. Catalysis depends on Ser-679, which acts as the Charge relay system.

Belongs to the peptidase S1 family. As to quaternary structure, serine protease component of the C3 convertase, also named C4bC2b, composed of the serine protease complement C2b and complement C4b. Serine protease component of the C5 convertase, also named C4bC2bC3b, composed of the serine protease complement C2b, complement C3b, as well as complement C4b. Requires Mg(2+) as cofactor. It depends on Mn(2+) as a cofactor. In terms of processing, cleaved and activated by different proteases depending on the complement pathway to generate complement C2a and serine protease complement C2b chains. Cleaved and activated by C1S following activation by the classical complement system. Cleaved and activated by MASP2 following activation by the lectin complement system. Cleaved and activated by GZMK following activation by the GZMK complement system.

The protein localises to the secreted. It is found in the cell surface. The enzyme catalyses Selective cleavage of Arg-|-Ser bond in complement component C3 alpha-chain to form C3a and C3b, and Arg-|-Xaa bond in complement component C5 alpha-chain to form C5a and C5b.. In terms of biological role, precursor of the catalytic component of the C3 and C5 convertase complexes, which are part of the complement pathway, a cascade of proteins that leads to phagocytosis and breakdown of pathogens and signaling that strengthens the adaptive immune system. Component C2 is part of the classical, lectin and GZMK complement systems. Its function is as follows. Catalytic component of the complement C3 and C5 convertase complexes. Following complement activation, recruited to the surface of pathogens by complement C4b opsonin to form the C3 convertase, or C3b and C4b opsonins to form the C5 convertase. As part of the C3 convertase, cleaves and activate C3 into C3a anaphylatoxin and C3b opsonin, the next components of the complement pathways. As part of the C5 convertase, cleaves and activate C5 into C5a anaphylatoxin and C5b component of the membrane attack complex. This chain is Complement C2, found in Pongo pygmaeus (Bornean orangutan).